The sequence spans 297 residues: Probable endonuclease 4 (297 aa).

H69, H110, E145, D179, H182, H214, D227, H229, and E259 together coordinate Zn(2+).

The protein belongs to the AP endonuclease 2 family. Zn(2+) is required as a cofactor.

The enzyme catalyses Endonucleolytic cleavage to 5'-phosphooligonucleotide end-products.. Endonuclease IV plays a role in DNA repair. It cleaves phosphodiester bonds at apurinic or apyrimidinic (AP) sites, generating a 3'-hydroxyl group and a 5'-terminal sugar phosphate. The protein is Probable endonuclease 4 of Listeria monocytogenes serovar 1/2a (strain ATCC BAA-679 / EGD-e).